A 305-amino-acid chain; its full sequence is Tyrosine recombinase XerD (305 aa).

A Core-binding (CB) domain is found at 3–88 (PADASVIERF…TLRAFYGLCL (86 aa)). A Tyr recombinase domain is found at 109 to 299 (SLPKALTESQ…ARQHLQKLHA (191 aa)). Active-site residues include arginine 149, lysine 173, histidine 251, arginine 254, and histidine 277. The active-site O-(3'-phospho-DNA)-tyrosine intermediate is tyrosine 286.

Belongs to the 'phage' integrase family. XerD subfamily. As to quaternary structure, forms a cyclic heterotetrameric complex composed of two molecules of XerC and two molecules of XerD.

The protein localises to the cytoplasm. Its function is as follows. Site-specific tyrosine recombinase, which acts by catalyzing the cutting and rejoining of the recombining DNA molecules. The XerC-XerD complex is essential to convert dimers of the bacterial chromosome into monomers to permit their segregation at cell division. It also contributes to the segregational stability of plasmids. The protein is Tyrosine recombinase XerD of Xanthomonas axonopodis pv. citri (strain 306).